The primary structure comprises 79 residues: Acyl carrier protein (79 aa).

Positions D2–V77 constitute a Carrier domain. At S37 the chain carries O-(pantetheine 4'-phosphoryl)serine.

This sequence belongs to the acyl carrier protein (ACP) family. In terms of processing, 4'-phosphopantetheine is transferred from CoA to a specific serine of apo-ACP by AcpS. This modification is essential for activity because fatty acids are bound in thioester linkage to the sulfhydryl of the prosthetic group.

It localises to the cytoplasm. Its pathway is lipid metabolism; fatty acid biosynthesis. Functionally, carrier of the growing fatty acid chain in fatty acid biosynthesis. The protein is Acyl carrier protein of Cupriavidus pinatubonensis (strain JMP 134 / LMG 1197) (Cupriavidus necator (strain JMP 134)).